A 191-amino-acid chain; its full sequence is Holliday junction branch migration complex subunit RuvA (191 aa).

The tract at residues 1 to 64 is domain I; that stretch reads MIGRLSGVLL…EDAHILFGFG (64 aa). The segment at 65–137 is domain II; the sequence is TNEERNVFKQ…LKGKLGADLG (73 aa). The flexible linker stretch occupies residues 137 to 141; that stretch reads GVAGA. The tract at residues 142 to 191 is domain III; the sequence is VATDATSDILNALLALGYSDKEAMLALKQVPAGTGVSDGIKLALKSLSKA.

It belongs to the RuvA family. As to quaternary structure, homotetramer. Forms an RuvA(8)-RuvB(12)-Holliday junction (HJ) complex. HJ DNA is sandwiched between 2 RuvA tetramers; dsDNA enters through RuvA and exits via RuvB. An RuvB hexamer assembles on each DNA strand where it exits the tetramer. Each RuvB hexamer is contacted by two RuvA subunits (via domain III) on 2 adjacent RuvB subunits; this complex drives branch migration. In the full resolvosome a probable DNA-RuvA(4)-RuvB(12)-RuvC(2) complex forms which resolves the HJ.

The protein localises to the cytoplasm. Functionally, the RuvA-RuvB-RuvC complex processes Holliday junction (HJ) DNA during genetic recombination and DNA repair, while the RuvA-RuvB complex plays an important role in the rescue of blocked DNA replication forks via replication fork reversal (RFR). RuvA specifically binds to HJ cruciform DNA, conferring on it an open structure. The RuvB hexamer acts as an ATP-dependent pump, pulling dsDNA into and through the RuvAB complex. HJ branch migration allows RuvC to scan DNA until it finds its consensus sequence, where it cleaves and resolves the cruciform DNA. In Janthinobacterium sp. (strain Marseille) (Minibacterium massiliensis), this protein is Holliday junction branch migration complex subunit RuvA.